The primary structure comprises 127 residues: Fumarate reductase subunit C (127 aa).

3 helical membrane passes run 30–50 (ATVLPLIFFTICLLVGLGSLV), 67–87 (IVVALNIVALAGSLFHAQTFF), and 107–127 (VVVLAQWAAVAAITLLVLVIV).

It belongs to the FrdC family. Part of an enzyme complex containing four subunits: a flavoprotein (FrdA), an iron-sulfur protein (FrdB), and two hydrophobic anchor proteins (FrdC and FrdD).

The protein localises to the cell inner membrane. Its function is as follows. Anchors the catalytic components of the fumarate reductase complex to the cell membrane, binds quinones. This chain is Fumarate reductase subunit C, found in Aliivibrio fischeri (strain ATCC 700601 / ES114) (Vibrio fischeri).